A 1680-amino-acid chain; its full sequence is RAF-like serine/threonine-protein kinase PRAF (1680 aa).

The interval 86 to 163 (FSPSDPHNSV…TPSDDGKDFP (78 aa)) is disordered. In terms of domain architecture, PB1 spans 166-267 (RVKFMCSFGG…SRLRVFLFPA (102 aa)). Disordered regions lie at residues 363–388 (LTGN…PLLA), 417–516 (PQYT…DSQQ), 556–580 (PDML…QPQQ), 594–613 (GANH…SQQF), 641–672 (QSTS…PQLQ), 700–725 (RSFR…LHRQ), and 1186–1226 (LPNA…LGGQ). The segment covering 366–388 (NLSNRSNAPSAPSSAPSSPPLLA) has biased composition (low complexity). The span at 446–482 (HEMHYRSTDSRRGPESPPKKFHDALHQDHPITVEQRR) shows a compositional bias: basic and acidic residues. 2 stretches are compositionally biased toward low complexity: residues 560–580 (QSSG…QPQQ) and 603–613 (QGDQQQQSQQF). Over residues 641–651 (QSTSYHGSAPS) the composition is skewed to polar residues. A compositionally biased stretch (low complexity) spans 1204–1217 (SRSSSSSLSELSKS). At serine 1248 the chain carries Phosphoserine. The segment covering 1339–1354 (ASTVDKENQEEVRTGL) has biased composition (basic and acidic residues). The segment at 1339 to 1372 (ASTVDKENQEEVRTGLDEPADEDKANSTGLGSDP) is disordered. Position 1365 is a phosphoserine (serine 1365). The region spanning 1389-1655 (LEELRELGSG…SDIAKELRTM (267 aa)) is the Protein kinase domain. ATP-binding positions include 1395–1403 (LGSGTFGTV) and lysine 1416. Aspartate 1518 serves as the catalytic Proton acceptor. The segment at 1661 to 1680 (PKTQAQTQGQSHPHPQMQIV) is disordered.

It belongs to the protein kinase superfamily. Ser/Thr protein kinase family. In terms of processing, hyperphosphorylated in response to auxin. Its phosphorylation state is also rapidly stimulated by photosynthetic activity (e.g. in response to blue light and red light irradiation); dephosphorylated in the darkness.

The protein localises to the cytoplasm. The enzyme catalyses L-seryl-[protein] + ATP = O-phospho-L-seryl-[protein] + ADP + H(+). The catalysed reaction is L-threonyl-[protein] + ATP = O-phospho-L-threonyl-[protein] + ADP + H(+). Its activity is regulated as follows. Activated by auxin via rapid phosphorylation. Regulated by photosynthesis-activity-dependent changes in its phosphorylation status. In terms of biological role, RAF-like protein kinase acting as a central mediator of a fast response pathway to auxin involving proteins phosphorylation, and leading to rapid cellular responses including membrane depolarization and cytoplasmic streaming. Required for general growth and developmental process. Photosynthesis signaling kinase involved in the regulation of the sucrose metabolism involving PGM1. Necessary for optimal chloroplast electron transport rate (ETR). The polypeptide is RAF-like serine/threonine-protein kinase PRAF (Marchantia polymorpha (Common liverwort)).